A 460-amino-acid polypeptide reads, in one-letter code: Cysteine--tRNA ligase (460 aa).

C29 contributes to the Zn(2+) binding site. Positions 31–41 (ATPQSSPHIGH) match the 'HIGH' region motif. Residues C212, H237, and E241 each coordinate Zn(2+). The 'KMSKS' region signature appears at 268–272 (KMSKS). K271 serves as a coordination point for ATP.

Belongs to the class-I aminoacyl-tRNA synthetase family. In terms of assembly, monomer. Zn(2+) is required as a cofactor.

It is found in the cytoplasm. It carries out the reaction tRNA(Cys) + L-cysteine + ATP = L-cysteinyl-tRNA(Cys) + AMP + diphosphate. The chain is Cysteine--tRNA ligase from Corynebacterium glutamicum (strain R).